The chain runs to 398 residues: Succinate--CoA ligase [ADP-forming] subunit beta (398 aa).

The region spanning 9 to 254 (KAVLREFGVS…ETEEDAKEIE (246 aa)) is the ATP-grasp domain. Residues Lys46, 53–55 (GRG), Glu109, Ala112, and Glu117 contribute to the ATP site. 2 residues coordinate Mg(2+): Asn209 and Asp223. Substrate is bound by residues Asn274 and 331–333 (GIM).

It belongs to the succinate/malate CoA ligase beta subunit family. Heterotetramer of two alpha and two beta subunits. Requires Mg(2+) as cofactor.

The enzyme catalyses succinate + ATP + CoA = succinyl-CoA + ADP + phosphate. It catalyses the reaction GTP + succinate + CoA = succinyl-CoA + GDP + phosphate. It participates in carbohydrate metabolism; tricarboxylic acid cycle; succinate from succinyl-CoA (ligase route): step 1/1. Succinyl-CoA synthetase functions in the citric acid cycle (TCA), coupling the hydrolysis of succinyl-CoA to the synthesis of either ATP or GTP and thus represents the only step of substrate-level phosphorylation in the TCA. The beta subunit provides nucleotide specificity of the enzyme and binds the substrate succinate, while the binding sites for coenzyme A and phosphate are found in the alpha subunit. In Afipia carboxidovorans (strain ATCC 49405 / DSM 1227 / KCTC 32145 / OM5) (Oligotropha carboxidovorans), this protein is Succinate--CoA ligase [ADP-forming] subunit beta.